A 443-amino-acid chain; its full sequence is Ribosomal protein uS12 methylthiotransferase RimO (443 aa).

The region spanning 5–116 (PTIAINHLGC…IVDIIRRTEQ (112 aa)) is the MTTase N-terminal domain. Positions 14, 50, 79, 154, 158, and 161 each coordinate [4Fe-4S] cluster. In terms of domain architecture, Radical SAM core spans 140-369 (TTNEAIAYLR…MALQQPISAQ (230 aa)). Residues 372 to 438 (AACLGQTLDV…DYDLYGMTAE (67 aa)) form the TRAM domain.

It belongs to the methylthiotransferase family. RimO subfamily. Requires [4Fe-4S] cluster as cofactor.

The protein resides in the cytoplasm. The catalysed reaction is L-aspartate(89)-[ribosomal protein uS12]-hydrogen + (sulfur carrier)-SH + AH2 + 2 S-adenosyl-L-methionine = 3-methylsulfanyl-L-aspartate(89)-[ribosomal protein uS12]-hydrogen + (sulfur carrier)-H + 5'-deoxyadenosine + L-methionine + A + S-adenosyl-L-homocysteine + 2 H(+). In terms of biological role, catalyzes the methylthiolation of an aspartic acid residue of ribosomal protein uS12. In Synechocystis sp. (strain ATCC 27184 / PCC 6803 / Kazusa), this protein is Ribosomal protein uS12 methylthiotransferase RimO.